The sequence spans 388 residues: Deoxyuridine 5'-triphosphate nucleotidohydrolase (388 aa).

Residues 77 to 88 (EEKYDKEQHPGE) show a composition bias toward basic and acidic residues. Disordered stretches follow at residues 77 to 96 (EEKYDKEQHPGEDEASSPLP) and 336 to 388 (THTP…PRHP). The span at 351 to 363 (VDDDVDETEEDEK) shows a compositional bias: acidic residues.

This sequence belongs to the dUTPase family. Mg(2+) is required as a cofactor.

The catalysed reaction is dUTP + H2O = dUMP + diphosphate + H(+). Its pathway is pyrimidine metabolism; dUMP biosynthesis; dUMP from dCTP (dUTP route): step 2/2. Its function is as follows. Involved in nucleotide metabolism: produces dUMP, the immediate precursor of thymidine nucleotides and decreases the intracellular concentration of dUTP to avoid uracil incorporation into viral DNA. In Homo sapiens (Human), this protein is Deoxyuridine 5'-triphosphate nucleotidohydrolase.